We begin with the raw amino-acid sequence, 427 residues long: Serine--tRNA ligase (427 aa).

An L-serine-binding site is contributed by 231-233 (TAE). Position 262 to 264 (262 to 264 (RSE)) interacts with ATP. Glu-285 is a binding site for L-serine. 349 to 352 (EISS) contributes to the ATP binding site. Ser-385 lines the L-serine pocket.

Belongs to the class-II aminoacyl-tRNA synthetase family. Type-1 seryl-tRNA synthetase subfamily. In terms of assembly, homodimer. The tRNA molecule binds across the dimer.

The protein localises to the cytoplasm. The enzyme catalyses tRNA(Ser) + L-serine + ATP = L-seryl-tRNA(Ser) + AMP + diphosphate + H(+). The catalysed reaction is tRNA(Sec) + L-serine + ATP = L-seryl-tRNA(Sec) + AMP + diphosphate + H(+). It functions in the pathway aminoacyl-tRNA biosynthesis; selenocysteinyl-tRNA(Sec) biosynthesis; L-seryl-tRNA(Sec) from L-serine and tRNA(Sec): step 1/1. Its function is as follows. Catalyzes the attachment of serine to tRNA(Ser). Is also able to aminoacylate tRNA(Sec) with serine, to form the misacylated tRNA L-seryl-tRNA(Sec), which will be further converted into selenocysteinyl-tRNA(Sec). The sequence is that of Serine--tRNA ligase from Rhizobium leguminosarum bv. trifolii (strain WSM2304).